A 652-amino-acid chain; its full sequence is Phosphoglucomutase 1, chloroplastic (652 aa).

The N-terminal 84 residues, 1–84 (MAFSAAASAS…LAARRTLRVR (84 aa)), are a transit peptide targeting the chloroplast. The alpha-D-glucose 1,6-bisphosphate site is built by Arg-118 and Ser-211. Ser-211 (phosphoserine intermediate) is an active-site residue. Mg(2+) contacts are provided by Ser-211, Asp-376, Asp-378, and Asp-380. Ser-211 carries the post-translational modification Phosphoserine. Asp-380, Arg-381, Thr-443, Glu-462, Ser-464, and Lys-475 together coordinate alpha-D-glucose 1,6-bisphosphate.

The protein belongs to the phosphohexose mutase family. Mg(2+) is required as a cofactor.

It is found in the plastid. Its subcellular location is the chloroplast. The enzyme catalyses alpha-D-glucose 1-phosphate = alpha-D-glucose 6-phosphate. It carries out the reaction O-phospho-L-seryl-[protein] + alpha-D-glucose 1-phosphate = alpha-D-glucose 1,6-bisphosphate + L-seryl-[protein]. It catalyses the reaction alpha-D-glucose 1,6-bisphosphate + L-seryl-[protein] = O-phospho-L-seryl-[protein] + alpha-D-glucose 6-phosphate. Its activity is regulated as follows. Inhibited by the Calvin cycle intermediates fructose-1,6-bisphosphate and ribulose-1,5-bisphosphate. Its function is as follows. Catalyzes the reversible isomerization of alpha-D-glucose 1-phosphate to alpha-D-glucose 6-phosphate. The mechanism proceeds via the intermediate compound alpha-D-glucose 1,6-bisphosphate. This enzyme participates in both the breakdown and synthesis of glucose. Required for sucrose production and accumulation necessary during plant development. Promotes gravitropic responses, negative in shoots but positive in roots, by facilitating starch granules (statoliths) formation. This is Phosphoglucomutase 1, chloroplastic from Marchantia polymorpha (Common liverwort).